The primary structure comprises 109 residues: Spermidine export protein MdtI (109 aa).

Transmembrane regions (helical) follow at residues 6–26 (WVHA…NVFL), 36–56 (IFGL…SQAV), 64–84 (AYAL…WILF), and 88–108 (LNRK…MVKL).

The protein belongs to the drug/metabolite transporter (DMT) superfamily. Small multidrug resistance (SMR) (TC 2.A.7.1) family. MdtI subfamily. As to quaternary structure, forms a complex with MdtJ.

The protein localises to the cell inner membrane. Its function is as follows. Catalyzes the excretion of spermidine. This Shigella dysenteriae serotype 1 (strain Sd197) protein is Spermidine export protein MdtI.